A 384-amino-acid chain; its full sequence is MTRRRLLHAGTLAGVAALLPAAALAAPSQCGPWPLWSAFVDKHIQRDGRVVDFLNPDQRSTSEGQSYALFFALVNNDQVLFDKVLSWTRHNLCGGRPDLNLPAWLWGRDGSGAWRVLDANTASDGELWIAYALLEAGRLWSRPGFLKAGQQMLQLIRTQEVATLPGLGPMLLPGRTGFVDNGRWTLNPSYLPIQVLRRCANADPKGPWAAIAANSARVLRDSAPVGFAPDWTVWDGKTFNADPKRGNVGSYDAIRVYLWAGMLDAGEPLRARLLQDLSGPADLLAAQQTPAEKIDTARGVGTGALPVGFSAALLPYLSALGKPALLKAQAQRVPAATQPAAAALPYFERTLALFGQGWLENRYRFAADGRLLPAWRTPACAATT.

The signal sequence occupies residues 1–25 (MTRRRLLHAGTLAGVAALLPAAALA). E63 acts as the Proton donor in catalysis. D124 functions as the Nucleophile in the catalytic mechanism.

Belongs to the glycosyl hydrolase 8 (cellulase D) family.

The protein localises to the secreted. The catalysed reaction is Endohydrolysis of (1-&gt;4)-beta-D-glucosidic linkages in cellulose, lichenin and cereal beta-D-glucans.. It functions in the pathway glycan metabolism; bacterial cellulose biosynthesis. Functionally, hydrolyzes carboxymethylcellulose. The sequence is that of Endoglucanase (bcsZ) from Xanthomonas axonopodis pv. citri (strain 306).